We begin with the raw amino-acid sequence, 142 residues long: Large ribosomal subunit protein uL13 (142 aa).

This sequence belongs to the universal ribosomal protein uL13 family. In terms of assembly, part of the 50S ribosomal subunit.

Functionally, this protein is one of the early assembly proteins of the 50S ribosomal subunit, although it is not seen to bind rRNA by itself. It is important during the early stages of 50S assembly. The chain is Large ribosomal subunit protein uL13 from Paraburkholderia phytofirmans (strain DSM 17436 / LMG 22146 / PsJN) (Burkholderia phytofirmans).